Reading from the N-terminus, the 354-residue chain is MARRNPLLFAIVVTILFVVCYGSALIAQTPPPVDNFVASAHYGSFKKRHGKAFGGDAEEGHRFNAFKQNMQTAYFLNTQNPHAHYDVSGKFADLTPQEFAKLYLNPDYYARHLKNHKEDVHVDDSAPSGVMSVDWRDKGAVTPVKNQGLCGSCWAFSAIGNIEGQWAASGHSLVSLSEQMLVSCDNIDEGCNGGLMDQAMNWIMQSHNGSVFTEASYPYTSGGGTRPPCHDEGEVGAKITGFLSLPHDEERIAEWVEKRGPVAVAVDATTWQLYFGGVVSLCLAWSLNHGVLIVGFNKNAKPPYWIVKNSWGSSWGEKGYIRLAMGSNQCMLKNYPVSATVESPHTPHVPTTTA.

An N-terminal signal peptide occupies residues 1–24 (MARRNPLLFAIVVTILFVVCYGSA). The propeptide at 25-125 (LIAQTPPPVD…HKEDVHVDDS (101 aa)) is activation peptide. Cystine bridges form between Cys150–Cys191, Cys184–Cys229, and Cys282–Cys330. The active site involves Cys153. Asn208 carries N-linked (GlcNAc...) asparagine glycosylation. Active-site residues include His289 and Asn309.

It belongs to the peptidase C1 family.

This is Cysteine proteinase A (LMCPA) from Leishmania mexicana.